The following is a 357-amino-acid chain: Alanine racemase (357 aa).

Residue lysine 33 is the Proton acceptor; specific for D-alanine of the active site. Lysine 33 carries the N6-(pyridoxal phosphate)lysine modification. Arginine 129 contacts substrate. Catalysis depends on tyrosine 253, which acts as the Proton acceptor; specific for L-alanine. A substrate-binding site is contributed by methionine 301.

It belongs to the alanine racemase family. Pyridoxal 5'-phosphate is required as a cofactor.

It carries out the reaction L-alanine = D-alanine. It functions in the pathway amino-acid biosynthesis; D-alanine biosynthesis; D-alanine from L-alanine: step 1/1. Its function is as follows. Catalyzes the interconversion of L-alanine and D-alanine. May also act on other amino acids. This Pseudomonas savastanoi pv. phaseolicola (strain 1448A / Race 6) (Pseudomonas syringae pv. phaseolicola (strain 1448A / Race 6)) protein is Alanine racemase (alr).